Reading from the N-terminus, the 326-residue chain is tRNA-modifying protein YgfZ (326 aa).

2 residues coordinate folate: Trp27 and Trp189.

The protein belongs to the tRNA-modifying YgfZ family.

The protein resides in the cytoplasm. Functionally, folate-binding protein involved in regulating the level of ATP-DnaA and in the modification of some tRNAs. It is probably a key factor in regulatory networks that act via tRNA modification, such as initiation of chromosomal replication. The sequence is that of tRNA-modifying protein YgfZ from Escherichia coli O6:H1 (strain CFT073 / ATCC 700928 / UPEC).